The following is a 463-amino-acid chain: MASTPSLLRLALLLLGAVGRAGPRPQGTTVSLSETVQKWREYRRQCQRFLTEAPLLATGLFCNRTFDDYACWPDGPPGSFVNVSCPWYLPWASSVLQGHVYRFCTAEGLWLHKDNSSLPWRDLSECEESKRGERNFPEEQLLSLYIIYTVGYALSFSALVIASAILVGFRHLHCTRNYIHLNLFASFILRALSVFIKDAALKWMYSTAAQQHQWDGLLSYQDSLGCRLVFLLMQYCVAANYYWLLVEGVYLYTLLAFSVFSEQRIFKLYLSIGWGVPLLFVIPWGIVKYLYEDEGCWTRNSNMNYWLIIRLPILFAIGVNFLIFIRVICIVVSKLKANLMCKTDIKCRLAKSTLTLIPLLGTHEVIFAFVMDEHARGTLRFIKLFTELSFTSFQGLMVAILYCFVNNEVQMEFRKCWERWRLEHLNIQRDCSMKPLKCPTSSVSSGATVGSSVYAATCQSSYS.

The signal sequence occupies residues 1-21 (MASTPSLLRLALLLLGAVGRA). Topologically, residues 22-139 (GPRPQGTTVS…KRGERNFPEE (118 aa)) are extracellular. 3 disulfides stabilise this stretch: cysteine 46/cysteine 71, cysteine 62/cysteine 104, and cysteine 85/cysteine 126. N-linked (GlcNAc...) asparagine glycosylation is found at asparagine 63, asparagine 82, and asparagine 115. The chain crosses the membrane as a helical span at residues 140-164 (QLLSLYIIYTVGYALSFSALVIASA). The Cytoplasmic portion of the chain corresponds to 165–175 (ILVGFRHLHCT). A helical membrane pass occupies residues 176–201 (RNYIHLNLFASFILRALSVFIKDAAL). The Extracellular portion of the chain corresponds to 202 to 227 (KWMYSTAAQQHQWDGLLSYQDSLGCR). A disulfide bridge connects residues cysteine 226 and cysteine 296. A helical transmembrane segment spans residues 228 to 251 (LVFLLMQYCVAANYYWLLVEGVYL). Topologically, residues 252-265 (YTLLAFSVFSEQRI) are cytoplasmic. Residues 266–290 (FKLYLSIGWGVPLLFVIPWGIVKYL) form a helical membrane-spanning segment. The Extracellular segment spans residues 291–305 (YEDEGCWTRNSNMNY). Residues 306–328 (WLIIRLPILFAIGVNFLIFIRVI) traverse the membrane as a helical segment. Topologically, residues 329-348 (CIVVSKLKANLMCKTDIKCR) are cytoplasmic. Cysteine 341 is modified (ADP-ribosylcysteine). Arginine 348 is subject to ADP-ribosylarginine. The helical transmembrane segment at 349–370 (LAKSTLTLIPLLGTHEVIFAFV) threads the bilayer. Residues 352-355 (STLT) are important for allosteric inhibitor binding. The Extracellular segment spans residues 371–383 (MDEHARGTLRFIK). The chain crosses the membrane as a helical span at residues 384–404 (LFTELSFTSFQGLMVAILYCF). Topologically, residues 405 to 463 (VNNEVQMEFRKCWERWRLEHLNIQRDCSMKPLKCPTSSVSSGATVGSSVYAATCQSSYS) are cytoplasmic.

The protein belongs to the G-protein coupled receptor 2 family. In terms of assembly, may form homodimers and heterodimers with GIPR. In terms of processing, N-glycosylation enhances cell surface expression and lengthens receptor half-life by preventing degradation in the ER. As to expression, detected in pancreatic islets (at protein level). Detected in pancreatic islets and lungs.

Its subcellular location is the cell membrane. Functionally, G-protein coupled receptor for glucagon-like peptide 1 (GLP-1). Ligand binding triggers activation of a signaling cascade that leads to the activation of adenylyl cyclase and increased intracellular cAMP levels. Plays a role in regulating insulin secretion in response to GLP-1. In Mus musculus (Mouse), this protein is Glucagon-like peptide 1 receptor (Glp1r).